Consider the following 307-residue polypeptide: Dihydroorotate dehydrogenase A (fumarate) (307 aa).

FMN-binding positions include Ser-21 and 46-47 (KT). Substrate-binding positions include Lys-46, 70 to 74 (NSVGL), and Asn-130. Asn-130 contributes to the FMN binding site. Cys-133 serves as the catalytic Nucleophile. The FMN site is built by Lys-168 and Ile-194. Residue 195-196 (NT) participates in substrate binding. Residues Gly-220, 246 to 247 (GG), and 268 to 269 (GS) contribute to the FMN site.

The protein belongs to the dihydroorotate dehydrogenase family. Type 1 subfamily. Homodimer. FMN serves as cofactor.

It is found in the cytoplasm. It catalyses the reaction (S)-dihydroorotate + fumarate = orotate + succinate. It participates in pyrimidine metabolism; UMP biosynthesis via de novo pathway. Catalyzes the conversion of dihydroorotate to orotate with fumarate as the electron acceptor. The protein is Dihydroorotate dehydrogenase A (fumarate) (pyrD) of Lactobacillus delbrueckii subsp. bulgaricus (strain ATCC 11842 / DSM 20081 / BCRC 10696 / JCM 1002 / NBRC 13953 / NCIMB 11778 / NCTC 12712 / WDCM 00102 / Lb 14).